We begin with the raw amino-acid sequence, 320 residues long: MRSAQVYRWQIPMDAGVVLRDRRLKTRDGLYVCLREGEREGWGEISPLPGFSQETWEEAQSVLLAWVNNWLAGDCELPQMPSVAFGVSCALAELADTLPQAANYRAAPLCNGDPDDLILKLADMPGEKVAKVKVGLYEAVRDGMVVNLLLEAIPDLHLRLDANRAWTPLKGQQFAKYVNPDYRHRIAFLEEPCKTRDDSRAFARETGIAIAWDESLREPDFAFVAEEGVRAVVIKPTLTGSLEKVREQVQAAHALRLTAVISSSIESSLGLTQLARIAAWLTPDTIPGLDTLDLMQAQQVRRWPGSTLPVVEVDALERLL.

Catalysis depends on lysine 133, which acts as the Proton donor. The Mg(2+) site is built by aspartate 161, glutamate 190, and aspartate 213. Lysine 235 serves as the catalytic Proton acceptor.

It belongs to the mandelate racemase/muconate lactonizing enzyme family. MenC type 1 subfamily. It depends on a divalent metal cation as a cofactor.

It carries out the reaction (1R,6R)-6-hydroxy-2-succinyl-cyclohexa-2,4-diene-1-carboxylate = 2-succinylbenzoate + H2O. It participates in quinol/quinone metabolism; 1,4-dihydroxy-2-naphthoate biosynthesis; 1,4-dihydroxy-2-naphthoate from chorismate: step 4/7. Its pathway is quinol/quinone metabolism; menaquinone biosynthesis. Converts 2-succinyl-6-hydroxy-2,4-cyclohexadiene-1-carboxylate (SHCHC) to 2-succinylbenzoate (OSB). The protein is o-succinylbenzoate synthase of Shigella boydii serotype 18 (strain CDC 3083-94 / BS512).